We begin with the raw amino-acid sequence, 777 residues long: Acyl-homoserine lactone acylase PvdQ (777 aa).

The first 25 residues, M1–A25, serve as a signal peptide directing secretion. Residues A196 to G218 constitute a propeptide, spacer peptide. The active-site Nucleophile is S219.

Belongs to the peptidase S45 family. As to quaternary structure, heterodimer of an alpha subunit and a beta subunit processed from the same precursor.

Its subcellular location is the periplasm. It carries out the reaction an N-acyl-L-homoserine lactone + H2O = L-homoserine lactone + a carboxylate. Its function is as follows. Catalyzes the deacylation of acyl-homoserine lactone (AHL or acyl-HSL), releasing homoserine lactone (HSL) and the corresponding fatty acid. Possesses a specificity for the degradation of long-chain acyl-HSLs (side chains of 11 to 14 carbons in length). The protein is Acyl-homoserine lactone acylase PvdQ (pvdQ) of Pseudomonas fluorescens (strain ATCC BAA-477 / NRRL B-23932 / Pf-5).